Consider the following 310-residue polypeptide: AT-hook motif nuclear-localized protein 15 (310 aa).

Disordered regions lie at residues 15–112 and 239–310; these read VESP…KESP and EEEQ…PPSY. Composition is skewed to polar residues over residues 31-41 and 51-67; these read SNNNNPPTMTR and TTNN…SQEE. The segment at residues 88–100 is a DNA-binding region (a.T hook); the sequence is RRPRGRPPGSKNK. Residues 94 to 104 show a composition bias toward low complexity; the sequence is PPGSKNKPKSP. The PPC domain maps to 112–251; sequence PNSLQSHVLE…QQQEQPLQLE (140 aa). The span at 301–310 shows a compositional bias: pro residues; sequence GPPPRAPPSY.

Its subcellular location is the nucleus. Functionally, transcription factor that specifically binds AT-rich DNA sequences related to the nuclear matrix attachment regions (MARs). Binds the DNA sequence GNFEI (GA-negative feedback element I) in the GA3OX1 promoter. Negatively regulates plant innate immunity (PTI) to pathogens through the down-regulation of the PAMP-triggered FRK1 expression. The chain is AT-hook motif nuclear-localized protein 15 from Arabidopsis thaliana (Mouse-ear cress).